Here is a 113-residue protein sequence, read N- to C-terminus: Putative pterin-4-alpha-carbinolamine dehydratase (113 aa).

It belongs to the pterin-4-alpha-carbinolamine dehydratase family.

It catalyses the reaction (4aS,6R)-4a-hydroxy-L-erythro-5,6,7,8-tetrahydrobiopterin = (6R)-L-erythro-6,7-dihydrobiopterin + H2O. The chain is Putative pterin-4-alpha-carbinolamine dehydratase from Nitrosomonas europaea (strain ATCC 19718 / CIP 103999 / KCTC 2705 / NBRC 14298).